A 620-amino-acid chain; its full sequence is 1-deoxy-D-xylulose-5-phosphate synthase (620 aa).

Residues H80 and 121-123 (GHS) each bind thiamine diphosphate. A Mg(2+)-binding site is contributed by D152. Thiamine diphosphate is bound by residues 153 to 154 (GA), N181, Y288, and E370. N181 lines the Mg(2+) pocket.

It belongs to the transketolase family. DXPS subfamily. As to quaternary structure, homodimer. It depends on Mg(2+) as a cofactor. The cofactor is thiamine diphosphate.

The enzyme catalyses D-glyceraldehyde 3-phosphate + pyruvate + H(+) = 1-deoxy-D-xylulose 5-phosphate + CO2. It functions in the pathway metabolic intermediate biosynthesis; 1-deoxy-D-xylulose 5-phosphate biosynthesis; 1-deoxy-D-xylulose 5-phosphate from D-glyceraldehyde 3-phosphate and pyruvate: step 1/1. In terms of biological role, catalyzes the acyloin condensation reaction between C atoms 2 and 3 of pyruvate and glyceraldehyde 3-phosphate to yield 1-deoxy-D-xylulose-5-phosphate (DXP). The polypeptide is 1-deoxy-D-xylulose-5-phosphate synthase (Escherichia coli O139:H28 (strain E24377A / ETEC)).